Here is a 674-residue protein sequence, read N- to C-terminus: L-type lectin-domain containing receptor kinase SIT1 (674 aa).

The N-terminal stretch at 1–27 is a signal peptide; the sequence is MRRPELIMRSLPLILFLSLGSFHLAAA. The Extracellular segment spans residues 28 to 301; the sequence is AVDDQFTFDG…IARAPSNVLK (274 aa). Residues 31 to 275 are legume-lectin like; sequence DQFTFDGFAG…VLAWSFKMDG (245 aa). Asparagine 42, asparagine 61, asparagine 143, asparagine 196, asparagine 219, asparagine 240, and asparagine 281 each carry an N-linked (GlcNAc...) asparagine glycan. A helical transmembrane segment spans residues 302–322; that stretch reads ILLPIASAALVSALAIAVLVI. Residues 323-674 are Cytoplasmic-facing; that stretch reads HRRRRRYAEL…GNISDIPRAR (352 aa). The 280-residue stretch at 357 to 636 folds into the Protein kinase domain; that stretch reads FSDERLLGFG…LDGAMPLPEL (280 aa). Residues 363 to 371 and lysine 386 each bind ATP; that span reads LGFGGFGRV. Catalysis depends on aspartate 482, which acts as the Proton acceptor. 4 positions are modified to phosphothreonine: threonine 511, threonine 515, threonine 516, and threonine 521.

The protein in the C-terminal section; belongs to the protein kinase superfamily. Ser/Thr protein kinase family. In the N-terminal section; belongs to the leguminous lectin family. In terms of assembly, interacts with B'KAPPA. Autophosphorylated at Thr-511, Thr-515 or Thr-516, and Thr-521 in response to salt stress. Dephosphorylated by phosphatase 2A in response to salt stress. In terms of tissue distribution, expressed in root epidermal cells.

The protein localises to the cell membrane. The enzyme catalyses L-seryl-[protein] + ATP = O-phospho-L-seryl-[protein] + ADP + H(+). The catalysed reaction is L-threonyl-[protein] + ATP = O-phospho-L-threonyl-[protein] + ADP + H(+). Its activity is regulated as follows. Activated by autophosphorylation in response to salt stress. Functionally, lectin-domain containing receptor kinase involved in salt stress response. Acts as a negative regulator of salt tolerance. Mediates salt sensitivity by phosphorylating and activating MPK3 and MPK6. Promotes ethylene production and mediates salt-induced ethylene signaling. Promotes the accumulation of reactive oxygen species (ROS) under salt stress conditions. Its kinase activity is triggered by salt stress and is required for its function in salt stress response. Phosphorylates B'KAPPA, a B regulatory subunit of phosphatase 2A (PP2A). The polypeptide is L-type lectin-domain containing receptor kinase SIT1 (Oryza sativa subsp. japonica (Rice)).